The chain runs to 411 residues: LL-diaminopimelate aminotransferase (411 aa).

Substrate is bound by residues Y15 and G42. Pyridoxal 5'-phosphate contacts are provided by residues Y72, 108-109 (AK), Y132, N188, Y219, and 247-249 (SFS). Residues K109, Y132, and N188 each contribute to the substrate site. N6-(pyridoxal phosphate)lysine is present on K250. Residues R258 and N293 each coordinate pyridoxal 5'-phosphate. Residues N293 and R389 each coordinate substrate.

This sequence belongs to the class-I pyridoxal-phosphate-dependent aminotransferase family. LL-diaminopimelate aminotransferase subfamily. Homodimer. The cofactor is pyridoxal 5'-phosphate.

It carries out the reaction (2S,6S)-2,6-diaminopimelate + 2-oxoglutarate = (S)-2,3,4,5-tetrahydrodipicolinate + L-glutamate + H2O + H(+). Its pathway is amino-acid biosynthesis; L-lysine biosynthesis via DAP pathway; LL-2,6-diaminopimelate from (S)-tetrahydrodipicolinate (aminotransferase route): step 1/1. Functionally, involved in the synthesis of meso-diaminopimelate (m-DAP or DL-DAP), required for both lysine and peptidoglycan biosynthesis. Catalyzes the direct conversion of tetrahydrodipicolinate to LL-diaminopimelate. In Desulfitobacterium hafniense (strain Y51), this protein is LL-diaminopimelate aminotransferase.